A 528-amino-acid chain; its full sequence is Ribonuclease Y (528 aa).

Residues 15 to 35 (SLFFLALICGSIIGYFLYSFF) form a helical membrane-spanning segment. Positions 217–277 (NISVVNIPNE…IRREIAKKTL (61 aa)) constitute a KH domain. The region spanning 343-436 (VLKHSLEVAF…VAIADTLSSA (94 aa)) is the HD domain.

Belongs to the RNase Y family.

The protein resides in the cell membrane. Its function is as follows. Endoribonuclease that initiates mRNA decay. The sequence is that of Ribonuclease Y from Aster yellows witches'-broom phytoplasma (strain AYWB).